The following is a 418-amino-acid chain: Serpin A3-8 (418 aa).

An N-terminal signal peptide occupies residues 1-25 (MRAERMSPLLALGLLVSGLCSRVHC). N103, N183, N233, and N268 each carry an N-linked (GlcNAc...) asparagine glycan.

Belongs to the serpin family. Homodimer.

The protein resides in the cytoplasmic vesicle. Its subcellular location is the secretory vesicle. The protein localises to the chromaffin granule. It is found in the secreted. Functionally, serine protease inhibitor. The polypeptide is Serpin A3-8 (Bos taurus (Bovine)).